A 151-amino-acid polypeptide reads, in one-letter code: Deoxyuridine 5'-triphosphate nucleotidohydrolase (151 aa).

Substrate-binding positions include 70-72, Asn-83, and 87-89; these read RSG and VID.

The protein belongs to the dUTPase family. Requires Mg(2+) as cofactor.

It carries out the reaction dUTP + H2O = dUMP + diphosphate + H(+). The protein operates within pyrimidine metabolism; dUMP biosynthesis; dUMP from dCTP (dUTP route): step 2/2. In terms of biological role, this enzyme is involved in nucleotide metabolism: it produces dUMP, the immediate precursor of thymidine nucleotides and it decreases the intracellular concentration of dUTP so that uracil cannot be incorporated into DNA. The sequence is that of Deoxyuridine 5'-triphosphate nucleotidohydrolase from Desulfitobacterium hafniense (strain DSM 10664 / DCB-2).